Here is a 325-residue protein sequence, read N- to C-terminus: 2-dehydro-3-deoxygluconokinase (325 aa).

Substrate is bound by residues 49–53 (GSEAN), Tyr-105, 121–123 (YYR), and Arg-181. ATP is bound by residues 179 to 181 (NIR), 240 to 245 (KLGAEG), and 269 to 272 (GAGD). 2 residues coordinate substrate: Asp-272 and Asp-308. The active-site Proton acceptor is the Asp-272.

The protein belongs to the carbohydrate kinase PfkB family. As to quaternary structure, homohexamer; trimer of dimers.

The catalysed reaction is 2-dehydro-3-deoxy-D-gluconate + ATP = 2-dehydro-3-deoxy-6-phospho-D-gluconate + ADP + H(+). Its pathway is carbohydrate acid metabolism; 2-dehydro-3-deoxy-D-gluconate degradation; D-glyceraldehyde 3-phosphate and pyruvate from 2-dehydro-3-deoxy-D-gluconate: step 1/2. Its function is as follows. Involved in the degradation of glucose via the semi-phosphorylative Entner-Doudoroff pathway. Catalyzes the phosphorylation of 2-keto-3-deoxygluconate (KDG) yielding 2-keto-3-deoxy-6-phosphogluconate (KDPG). The protein is 2-dehydro-3-deoxygluconokinase (kdgK) of Thermoproteus tenax.